The sequence spans 291 residues: Gamma-sarcoglycan (291 aa).

Over 1–37 (MVREQYTTATEGICIERPENQYVYKIGIYGWRKRCLY) the chain is Cytoplasmic. The helical; Signal-anchor for type II membrane protein transmembrane segment at 38–58 (LFVLLLLIILVVNLALTIWIL) threads the bilayer. The Extracellular segment spans residues 59-291 (KVMWFSPAGM…TCQEHNHICL (233 aa)). An N-linked (GlcNAc...) asparagine glycan is attached at Asn110. 2 cysteine pairs are disulfide-bonded: Cys265/Cys290 and Cys267/Cys283.

It belongs to the sarcoglycan beta/delta/gamma/zeta family. Interacts with the syntrophin SNTA1. Cross-link to form 2 major subcomplexes: one consisting of SGCB, SGCD and SGCG and the other consisting of SGCB and SGCD. The association between SGCB and SGCG is particularly strong while SGCA is loosely associated with the other sarcoglycans. Interacts with FLNC. Expressed in skeletal and heart muscle.

Its subcellular location is the cell membrane. It is found in the sarcolemma. The protein resides in the cytoplasm. The protein localises to the cytoskeleton. Component of the sarcoglycan complex, a subcomplex of the dystrophin-glycoprotein complex which forms a link between the F-actin cytoskeleton and the extracellular matrix. This Homo sapiens (Human) protein is Gamma-sarcoglycan (SGCG).